We begin with the raw amino-acid sequence, 571 residues long: Proline--tRNA ligase (571 aa).

This sequence belongs to the class-II aminoacyl-tRNA synthetase family. ProS type 1 subfamily. As to quaternary structure, homodimer.

The protein resides in the cytoplasm. It catalyses the reaction tRNA(Pro) + L-proline + ATP = L-prolyl-tRNA(Pro) + AMP + diphosphate. In terms of biological role, catalyzes the attachment of proline to tRNA(Pro) in a two-step reaction: proline is first activated by ATP to form Pro-AMP and then transferred to the acceptor end of tRNA(Pro). As ProRS can inadvertently accommodate and process non-cognate amino acids such as alanine and cysteine, to avoid such errors it has two additional distinct editing activities against alanine. One activity is designated as 'pretransfer' editing and involves the tRNA(Pro)-independent hydrolysis of activated Ala-AMP. The other activity is designated 'posttransfer' editing and involves deacylation of mischarged Ala-tRNA(Pro). The misacylated Cys-tRNA(Pro) is not edited by ProRS. The sequence is that of Proline--tRNA ligase from Shewanella baltica (strain OS195).